A 104-amino-acid polypeptide reads, in one-letter code: Iron-sulfur cluster assembly protein CyaY (104 aa).

Belongs to the frataxin family.

Involved in iron-sulfur (Fe-S) cluster assembly. May act as a regulator of Fe-S biogenesis. The sequence is that of Iron-sulfur cluster assembly protein CyaY from Vibrio campbellii (strain ATCC BAA-1116).